Consider the following 240-residue polypeptide: Ribonuclease PH (240 aa).

Phosphate-binding positions include arginine 87 and glycine 125–arginine 127.

The protein belongs to the RNase PH family. Homohexameric ring arranged as a trimer of dimers.

The enzyme catalyses tRNA(n+1) + phosphate = tRNA(n) + a ribonucleoside 5'-diphosphate. Its function is as follows. Phosphorolytic 3'-5' exoribonuclease that plays an important role in tRNA 3'-end maturation. Removes nucleotide residues following the 3'-CCA terminus of tRNAs; can also add nucleotides to the ends of RNA molecules by using nucleoside diphosphates as substrates, but this may not be physiologically important. Probably plays a role in initiation of 16S rRNA degradation (leading to ribosome degradation) during starvation. This is Ribonuclease PH from Pseudomonas syringae pv. tomato (strain ATCC BAA-871 / DC3000).